The following is a 194-amino-acid chain: uncharacterized protein (194 aa).

CBS domains are found at residues 13-72 (MSFP…PKDV) and 78-133 (MSKK…LLEI). In terms of domain architecture, ACP-type MB spans 159-192 (YINGICENCGYQGRVRLYQGRYLCDECIEEFEEK). Cysteine 164, cysteine 167, cysteine 182, and cysteine 185 together coordinate Fe cation. Residues cysteine 164, cysteine 167, cysteine 182, and cysteine 185 each contribute to the Zn(2+) site.

This is an uncharacterized protein from Methanocaldococcus jannaschii (strain ATCC 43067 / DSM 2661 / JAL-1 / JCM 10045 / NBRC 100440) (Methanococcus jannaschii).